Reading from the N-terminus, the 612-residue chain is Peroxisomal carnitine O-octanoyltransferase (612 aa).

At Met-1 the chain carries N-acetylmethionine. 2 positions are modified to N6-succinyllysine: Lys-40 and Lys-57. Catalysis depends on His-327, which acts as the Proton acceptor. CoA is bound by residues Lys-406 and 410–417 (KKEALHPD). Position 406 is an N6-acetyllysine; alternate (Lys-406). Lys-406 bears the N6-succinyllysine; alternate mark. Tyr-439, Thr-441, and Thr-452 together coordinate (R)-carnitine. The short motif at 610-612 (AHL) is the Microbody targeting signal element.

This sequence belongs to the carnitine/choline acetyltransferase family. In terms of tissue distribution, liver.

The protein resides in the peroxisome. The catalysed reaction is octanoyl-CoA + (R)-carnitine = O-octanoyl-(R)-carnitine + CoA. It carries out the reaction 4,8-dimethylnonanoyl-CoA + (R)-carnitine = O-4,8-dimethylnonanoyl-(R)-carnitine + CoA. The protein operates within lipid metabolism; fatty acid beta-oxidation. Beta-oxidation of fatty acids. The highest activity concerns the C6 to C10 chain length substrate. This Rattus norvegicus (Rat) protein is Peroxisomal carnitine O-octanoyltransferase (Crot).